The following is a 302-amino-acid chain: Nudix hydrolase 5 (302 aa).

The region spanning Ser122–Ala254 is the Nudix hydrolase domain. A Nudix box motif is present at residues Gly159 to Asp180. Glu174 and Glu178 together coordinate Mg(2+).

Belongs to the Nudix hydrolase family. It depends on Mg(2+) as a cofactor. Mn(2+) is required as a cofactor. Expressed in roots, stems and leaves.

Probably mediates the hydrolysis of some nucleoside diphosphate derivatives. The chain is Nudix hydrolase 5 (NUDT5) from Arabidopsis thaliana (Mouse-ear cress).